A 424-amino-acid polypeptide reads, in one-letter code: GTPase Obg (424 aa).

The 158-residue stretch at 1–158 folds into the Obg domain; the sequence is MFYDQAKIYV…RNLLLELKLL (158 aa). One can recognise an OBG-type G domain in the interval 159 to 329; sequence ADVGLVGFPN…LVYAAAKALP (171 aa). Residues 165 to 172, 190 to 194, 212 to 215, 282 to 285, and 310 to 312 each bind GTP; these read GFPNVGKS, FTTLV, DIPG, NKMD, and SAA. Mg(2+) is bound by residues S172 and T192. In terms of domain architecture, OCT spans 347 to 424; that stretch reads TQASAPHRFE…IAGIEFEWEE (78 aa).

Belongs to the TRAFAC class OBG-HflX-like GTPase superfamily. OBG GTPase family. As to quaternary structure, monomer. The cofactor is Mg(2+).

Its subcellular location is the cytoplasm. An essential GTPase which binds GTP, GDP and possibly (p)ppGpp with moderate affinity, with high nucleotide exchange rates and a fairly low GTP hydrolysis rate. Plays a role in control of the cell cycle, stress response, ribosome biogenesis and in those bacteria that undergo differentiation, in morphogenesis control. This chain is GTPase Obg, found in Desulfitobacterium hafniense (strain DSM 10664 / DCB-2).